We begin with the raw amino-acid sequence, 502 residues long: ATP synthase subunit alpha (502 aa).

Residues 115–135 (VDGLGPINTTNTRPIESPAPG) are disordered. 169–176 (GDRQTGKT) is an ATP binding site.

The protein belongs to the ATPase alpha/beta chains family. In terms of assembly, F-type ATPases have 2 components, CF(1) - the catalytic core - and CF(0) - the membrane proton channel. CF(1) has five subunits: alpha(3), beta(3), gamma(1), delta(1), epsilon(1). CF(0) has three main subunits: a(1), b(2) and c(9-12). The alpha and beta chains form an alternating ring which encloses part of the gamma chain. CF(1) is attached to CF(0) by a central stalk formed by the gamma and epsilon chains, while a peripheral stalk is formed by the delta and b chains.

It is found in the cell membrane. It catalyses the reaction ATP + H2O + 4 H(+)(in) = ADP + phosphate + 5 H(+)(out). Produces ATP from ADP in the presence of a proton gradient across the membrane. The alpha chain is a regulatory subunit. In Bacillus anthracis (strain A0248), this protein is ATP synthase subunit alpha.